The sequence spans 320 residues: Apolipoprotein E (320 aa).

An N-terminal signal peptide occupies residues 1–18; that stretch reads MKVLWAALLVAFLAGCQG. 8 consecutive repeat copies span residues 82–103, 104–125, 126–147, 148–169, 170–191, 192–213, 214–236, and 237–258. The tract at residues 82–258 is 8 X 22 AA approximate tandem repeats; that stretch reads ALMEETMKEL…RLDEVKEQVE (177 aa). At M145 the chain carries Methionine sulfoxide. S149 carries the phosphoserine modification. Positions 160–170 are LDL and other lipoprotein receptors binding; it reads HLRKLRKRLLR. A heparin-binding site is contributed by 164 to 167; that stretch reads LRKR. The segment at 212-293 is lipid-binding and lipoprotein association; sequence AATVGSSLAS…SWFEPLVEDM (82 aa). O-linked (GalNAc...) threonine glycosylation occurs at T214. Position 232 to 239 (232 to 239) interacts with heparin; sequence GERLRARM. The homooligomerization stretch occupies residues 269–320; sequence QQMRLQAEAFQARLKSWFEPLVEDMQRQWAGLVEKVQAAVGASTTPVPSDNH. Residues 281–293 are specificity for association with VLDL; sequence RLKSWFEPLVEDM.

Belongs to the apolipoprotein A1/A4/E family. Homotetramer. May interact with ABCA1; functionally associated with ABCA1 in the biogenesis of HDLs. May interact with APP/A4 amyloid-beta peptide; the interaction is extremely stable in vitro but its physiological significance is unclear. May interact with MAPT. May interact with MAP2. In the cerebrospinal fluid, interacts with secreted SORL1. Interacts with PMEL; this allows the loading of PMEL luminal fragment on ILVs to induce fibril nucleation. Post-translationally, APOE exists as multiple glycosylated and sialylated glycoforms within cells and in plasma. The extent of glycosylation and sialylation are tissue and context specific. In terms of processing, glycated in plasma VLDL. Phosphorylated by FAM20C in the extracellular medium.

It is found in the secreted. It localises to the extracellular space. Its subcellular location is the extracellular matrix. The protein localises to the extracellular vesicle. The protein resides in the endosome. It is found in the multivesicular body. Its function is as follows. APOE is an apolipoprotein, a protein associating with lipid particles, that mainly functions in lipoprotein-mediated lipid transport between organs via the plasma and interstitial fluids. APOE is a core component of plasma lipoproteins and is involved in their production, conversion and clearance. Apolipoproteins are amphipathic molecules that interact both with lipids of the lipoprotein particle core and the aqueous environment of the plasma. As such, APOE associates with chylomicrons, chylomicron remnants, very low density lipoproteins (VLDL) and intermediate density lipoproteins (IDL) but shows a preferential binding to high-density lipoproteins (HDL). It also binds a wide range of cellular receptors including the LDL receptor/LDLR, the LDL receptor-related proteins LRP1, LRP2 and LRP8 and the very low-density lipoprotein receptor/VLDLR that mediate the cellular uptake of the APOE-containing lipoprotein particles. Finally, APOE also has a heparin-binding activity and binds heparan-sulfate proteoglycans on the surface of cells, a property that supports the capture and the receptor-mediated uptake of APOE-containing lipoproteins by cells. A main function of APOE is to mediate lipoprotein clearance through the uptake of chylomicrons, VLDLs, and HDLs by hepatocytes. APOE is also involved in the biosynthesis by the liver of VLDLs as well as their uptake by peripheral tissues ensuring the delivery of triglycerides and energy storage in muscle, heart and adipose tissues. By participating in the lipoprotein-mediated distribution of lipids among tissues, APOE plays a critical role in plasma and tissues lipid homeostasis. APOE is also involved in two steps of reverse cholesterol transport, the HDLs-mediated transport of cholesterol from peripheral tissues to the liver, and thereby plays an important role in cholesterol homeostasis. First, it is functionally associated with ABCA1 in the biogenesis of HDLs in tissues. Second, it is enriched in circulating HDLs and mediates their uptake by hepatocytes. APOE also plays an important role in lipid transport in the central nervous system, regulating neuron survival and sprouting. This Cebus capucinus (White-faced sapajou) protein is Apolipoprotein E (APOE).